The chain runs to 250 residues: Probable transcriptional regulatory protein RC1_1808 (250 aa).

Residues 1 to 21 (MAGHSQFKNIMHRKGAQDAKR) are disordered.

Belongs to the TACO1 family.

It localises to the cytoplasm. The chain is Probable transcriptional regulatory protein RC1_1808 from Rhodospirillum centenum (strain ATCC 51521 / SW).